We begin with the raw amino-acid sequence, 972 residues long: 116 kDa U5 small nuclear ribonucleoprotein component (972 aa).

The residue at position 1 (M1) is an N-acetylmethionine. Residues 1–53 are disordered; it reads MDTDLYDEFGNYIGPELDSDEDDDELGRETKDLDEVDEDEDDDDVGDHDEDHP. Composition is skewed to acidic residues over residues 17 to 26 and 34 to 48; these read LDSDEDDDEL and DEVD…VGDH. Position 19 is a phosphoserine (S19). Residue K64 forms a Glycyl lysine isopeptide (Lys-Gly) (interchain with G-Cter in SUMO1); alternate linkage. Residue K64 forms a Glycyl lysine isopeptide (Lys-Gly) (interchain with G-Cter in SUMO2); alternate linkage. T86 bears the Phosphothreonine mark. A tr-type G domain is found at 127-409; sequence ELIRNVTLCG…GIHLTKEELK (283 aa). Residues 136 to 143, 204 to 208, and 258 to 261 each bind GTP; these read GHLHHGKT, DTPGH, and NKID.

The protein belongs to the TRAFAC class translation factor GTPase superfamily. Classic translation factor GTPase family. EF-G/EF-2 subfamily. Component of the U5 snRNP and the U4/U6-U5 tri-snRNP complex, a building block of the spliceosome. The U4/U6-U5 tri-snRNP complex is composed of the U4, U6 and U5 snRNAs and at least PRPF3, PRPF4, PRPF6, PRPF8, PRPF31, SNRNP200, TXNL4A, SNRNP40, DDX23, CD2BP2, PPIH, SNU13, EFTUD2, SART1 and USP39. Component of the pre-catalytic, catalytic and post-catalytic spliceosome complexes. Component of the minor spliceosome, which splices U12-type introns. Within this complex, interacts with CRIPT. Interacts with ERBB4 and PRPF8. Interacts with PIH1D1. Interacts with RPAP3 and URI1 in a ZNHIT2-dependent manner. Interacts with NRDE2. Interacts with FAM50A. Interacts with UBL5.

It localises to the nucleus. Required for pre-mRNA splicing as component of the spliceosome, including pre-catalytic, catalytic and post-catalytic spliceosomal complexes. Component of the U5 snRNP and the U4/U6-U5 tri-snRNP complex, a building block of the spliceosome. As a component of the minor spliceosome, involved in the splicing of U12-type introns in pre-mRNAs. In Bos taurus (Bovine), this protein is 116 kDa U5 small nuclear ribonucleoprotein component (EFTUD2).